The chain runs to 332 residues: 3-ketodihydrosphingosine reductase (332 aa).

A signal peptide spans 1-25; that stretch reads MLLLAAASLVAFVLLLYMVSPLISP. At 26–269 the chain is on the cytoplasmic side; that stretch reads KPLALPGAHV…QGNFNSSIGS (244 aa). Gly39, Ser41, Ser42, Gly43, Arg64, Lys68, and Asp93 together coordinate NADPH. A GXSXG motif is present at residues 39 to 43; that stretch reads GGSSG. Ser172 serves as the catalytic Proton donor. Tyr186 functions as the Proton acceptor in the catalytic mechanism. Tyr186 and Lys190 together coordinate NADP(+). Catalysis depends on Lys190, which acts as the Lowers pKa of active site Tyr. Residues 270–290 traverse the membrane as a helical segment; sequence DGYMLSSLTCGMAPVTSIMEG. The Lumenal segment spans residues 291–292; that stretch reads LQ. Residues 293–313 form a helical membrane-spanning segment; it reads QVVTMGLFRTIALFYLGSFDS. The Cytoplasmic segment spans residues 314 to 331; that stretch reads IVRRCMMQKAKLETVDKT.

This sequence belongs to the short-chain dehydrogenases/reductases (SDR) family.

It is found in the endoplasmic reticulum membrane. The enzyme catalyses sphinganine + NADP(+) = 3-oxosphinganine + NADPH + H(+). It functions in the pathway lipid metabolism; sphingolipid metabolism. Functionally, catalyzes the reduction of 3'-oxosphinganine (3-ketodihydrosphingosine/KDS) to sphinganine (dihydrosphingosine/DHS), the second step of de novo sphingolipid biosynthesis. This chain is 3-ketodihydrosphingosine reductase (KDSR), found in Bos taurus (Bovine).